Consider the following 457-residue polypeptide: Aromatic amino acid transport protein AroP (457 aa).

Over 1–19 (MMEGQQHGEQLKRGLKNRH) the chain is Cytoplasmic. A helical transmembrane segment spans residues 20 to 40 (IQLIALGGAIGTGLFLGSASV). The Periplasmic portion of the chain corresponds to 41-42 (IQ). Residues 43–63 (SAGPGIILGYAIAGFIAFLIM) form a helical membrane-spanning segment. Residues 64–86 (RQLGEMVVEEPVAGSFSHFAYKY) are Cytoplasmic-facing. The chain crosses the membrane as a helical span at residues 87–107 (WGSFAGFASGWNYWVLYVLVA). Topologically, residues 108–117 (MAELTAVGKY) are periplasmic. The helical transmembrane segment at 118–138 (IQFWYPEIPTWVSAAVFFVVI) threads the bilayer. Residues 139–155 (NAINLTNVTVFGEMEFW) are Cytoplasmic-facing. The helical transmembrane segment at 156–176 (FAIIKVIAVVAMIIFGGWLLF) threads the bilayer. Topologically, residues 177–201 (SGNGGPQASVSNLWDQGGFLPHGFT) are periplasmic. The helical transmembrane segment at 202 to 222 (GLVMMMAIIMFSFGGLELVGI) threads the bilayer. Topologically, residues 223–240 (TAAEADNPEQSIPKATNQ) are cytoplasmic. A helical membrane pass occupies residues 241–261 (VIYRILIFYIGSLAVLLSLMP). Residues 262–271 (WTRVTADTSP) are Periplasmic-facing. A helical transmembrane segment spans residues 272–292 (FVLIFHELGDTFVANALNIVV). At 293–333 (LTAALSVYNSCVYCNSRMLFGLAQQGNAPKALASVDKRGVP) the chain is on the cytoplasmic side. A helical membrane pass occupies residues 334-354 (VNTILVSALVTALCVLINYLA). Residues 355–358 (PESA) lie on the Periplasmic side of the membrane. Residues 359–379 (FGLLMALVVSALVINWAMISL) form a helical membrane-spanning segment. Over 380 to 407 (AHMKFRRAKQEQGVVTRFPALLYPLGNW) the chain is Cytoplasmic. A helical transmembrane segment spans residues 408 to 428 (ICLLFMAVVLVIMLMTPGMAI). Position 429 (S429) is a topological domain, periplasmic. Residues 430 to 450 (VYLIPVWLVVLGIGYLFKEKT) form a helical membrane-spanning segment. The Cytoplasmic portion of the chain corresponds to 451 to 457 (AKAVKAH).

It belongs to the amino acid-polyamine-organocation (APC) superfamily. Amino acid transporter (AAT) (TC 2.A.3.1) family.

Its subcellular location is the cell inner membrane. It catalyses the reaction L-phenylalanine(in) + H(+)(in) = L-phenylalanine(out) + H(+)(out). The enzyme catalyses L-tryptophan(in) + H(+)(in) = L-tryptophan(out) + H(+)(out). It carries out the reaction L-tyrosine(in) + H(+)(in) = L-tyrosine(out) + H(+)(out). Functionally, permease that is involved in the active transport across the cytoplasmic membrane of all three aromatic amino acids, phenylalanine, tyrosine and tryptophan. This chain is Aromatic amino acid transport protein AroP (aroP), found in Escherichia coli O157:H7.